Reading from the N-terminus, the 1328-residue chain is Mitogen-activated protein kinase kinase kinase 19 (1328 aa).

Residues 1 to 19 (MSSMPKPERHAESLLDICH) are compositionally biased toward basic and acidic residues. Disordered regions lie at residues 1-28 (MSSM…PTDL), 44-74 (RSEE…QDWQ), 344-380 (VREE…AKNY), and 524-561 (QEND…GPIK). Basic and acidic residues predominate over residues 344–361 (VREEDIDCHGSKTRKPEE). Residues 364-377 (SQYLSSRKNESSVA) show a composition bias toward polar residues. A compositionally biased stretch (basic and acidic residues) spans 524 to 542 (QENDKHKMNSHRSKLDSKT). Residues 1061-1324 (WTKGEILGKG…ALQLLKHSFL (264 aa)) enclose the Protein kinase domain. ATP contacts are provided by residues 1067–1075 (LGKGAYGTV) and Lys1089. Asp1186 serves as the catalytic Proton acceptor.

This sequence belongs to the protein kinase superfamily. STE Ser/Thr protein kinase family. STE20 subfamily.

It catalyses the reaction L-seryl-[protein] + ATP = O-phospho-L-seryl-[protein] + ADP + H(+). The catalysed reaction is L-threonyl-[protein] + ATP = O-phospho-L-threonyl-[protein] + ADP + H(+). The protein is Mitogen-activated protein kinase kinase kinase 19 (MAP3K19) of Homo sapiens (Human).